The primary structure comprises 305 residues: UDP-3-O-acyl-N-acetylglucosamine deacetylase (305 aa).

Zn(2+) contacts are provided by His79, His238, and Asp242. His265 (proton donor) is an active-site residue.

The protein belongs to the LpxC family. Zn(2+) serves as cofactor.

The catalysed reaction is a UDP-3-O-[(3R)-3-hydroxyacyl]-N-acetyl-alpha-D-glucosamine + H2O = a UDP-3-O-[(3R)-3-hydroxyacyl]-alpha-D-glucosamine + acetate. Its pathway is glycolipid biosynthesis; lipid IV(A) biosynthesis; lipid IV(A) from (3R)-3-hydroxytetradecanoyl-[acyl-carrier-protein] and UDP-N-acetyl-alpha-D-glucosamine: step 2/6. Functionally, catalyzes the hydrolysis of UDP-3-O-myristoyl-N-acetylglucosamine to form UDP-3-O-myristoylglucosamine and acetate, the committed step in lipid A biosynthesis. The polypeptide is UDP-3-O-acyl-N-acetylglucosamine deacetylase (Edwardsiella ictaluri (strain 93-146)).